A 201-amino-acid chain; its full sequence is Retinol-binding protein 4 (201 aa).

An N-terminal signal peptide occupies residues 1–18 (MEWVWALVLLAALGSAQA). 3 cysteine pairs are disulfide-bonded: Cys-22-Cys-178, Cys-88-Cys-192, and Cys-138-Cys-147. Gln-116 is a binding site for substrate. Arg-139 bears the Omega-N-methylarginine mark.

The protein belongs to the calycin superfamily. Lipocalin family. Interacts with TTR. Interaction with TTR prevents its loss by filtration through the kidney glomeruli. Interacts with STRA6.

Its subcellular location is the secreted. Functionally, retinol-binding protein that mediates retinol transport in blood plasma. Delivers retinol from the liver stores to the peripheral tissues. Transfers the bound all-trans retinol to STRA6, that then facilitates retinol transport across the cell membrane. The protein is Retinol-binding protein 4 (RBP4) of Sus scrofa (Pig).